A 445-amino-acid chain; its full sequence is GRAM domain-containing protein 2B (445 aa).

An N-acetylmethionine modification is found at Met1. The span at 1–10 (MVKKPISSSD) shows a compositional bias: polar residues. Residues 1–119 (MVKKPISSSD…RKKSSSSSQY (119 aa)) form a disordered region. The segment covering 18–37 (PSSPKSSAGASHSSTDSPSS) has biased composition (low complexity). Composition is skewed to polar residues over residues 56–68 (KSPT…SSVE) and 82–93 (SKSSFDGSNLLS). Basic and acidic residues predominate over residues 94-112 (DKNDCKTESKADSKTERKK). Residues 123-190 (MHFHKLFLDV…FSVTLIKKTK (68 aa)) form the GRAM domain. Ser238, Ser255, and Ser265 each carry phosphoserine. The interval 277–331 (DLEGYSSSGSQTPESENSRDFHVTESQTVLNVTKGETKPPRTDAHGSRAPDGKAK) is disordered. Residues 281 to 291 (YSSSGSQTPES) are compositionally biased toward polar residues. Residues 311 to 330 (GETKPPRTDAHGSRAPDGKA) are compositionally biased toward basic and acidic residues.

This is GRAM domain-containing protein 2B (Gramd2b) from Rattus norvegicus (Rat).